A 1126-amino-acid chain; its full sequence is Stress response protein nst1 (1126 aa).

Positions 1 to 17 (MSTAAPAASATNSAIPA) are enriched in low complexity. 7 disordered regions span residues 1-192 (MSTA…STQE), 266-348 (NQGS…ARAA), 404-453 (AAHQ…EQRM), 492-774 (LLEE…NGLP), 823-914 (NGAR…AQRD), 939-965 (LSQSLPGATAPGPLPGPARASFGGPSL), and 1075-1126 (FEPD…PMGF). The span at 35-45 (NRKKQKRRQKQ) shows a compositional bias: basic residues. Over residues 96 to 111 (ANHKDDQDSVDAHDDY) the composition is skewed to basic and acidic residues. A compositionally biased stretch (basic residues) spans 125–136 (TGRKSKKKKGKK). Over residues 291–300 (GQHTRTQGQF) the composition is skewed to polar residues. Composition is skewed to acidic residues over residues 311–344 (PEEEDDDDLEEDYDEDEEDDEPYSDEDSDDEDDE) and 419–448 (DEEDYDEEEDEDYDSQEDEDYEEDEMDTMT). Positions 479–655 (KVAEQRQQKL…KREYQAKRTS (177 aa)) form a coiled coil. Basic and acidic residues-rich tracts occupy residues 492–512 (LLEEETRNEQRNAKKAREAQK) and 522–651 (QAKE…EYQA). 2 stretches are compositionally biased toward polar residues: residues 655–670 (SPFSSNQHPQISSSPV) and 694–721 (QPSQQDSHTSSPHSQPASTDPSQASVSP). Low complexity predominate over residues 727-737 (SQSSGASSVAS). Composition is skewed to polar residues over residues 846-860 (GQQQIPGAFSAQQSG) and 867-885 (RQPSGSFERSPLEGQTQPM). A compositionally biased stretch (low complexity) spans 886–898 (PISRPSPIKRPSS). Residues 902–914 (DQRKNGDRTAQRD) are compositionally biased toward basic and acidic residues. Residues 1115–1126 (VLRQFSSPPMGF) are compositionally biased toward polar residues.

The protein belongs to the NST1 family.

The protein localises to the cytoplasm. Its function is as follows. May act as a negative regulator of salt tolerance. The sequence is that of Stress response protein nst1 (nst1) from Aspergillus clavatus (strain ATCC 1007 / CBS 513.65 / DSM 816 / NCTC 3887 / NRRL 1 / QM 1276 / 107).